Here is a 520-residue protein sequence, read N- to C-terminus: Maturase K (520 aa).

Belongs to the intron maturase 2 family. MatK subfamily.

It localises to the plastid. It is found in the chloroplast. Functionally, usually encoded in the trnK tRNA gene intron. Probably assists in splicing its own and other chloroplast group II introns. This Cycas taitungensis (Prince sago) protein is Maturase K.